The primary structure comprises 2465 residues: Highly reducing polyketide synthase milA (2465 aa).

Residues 1-434 (MEPIAIVGSA…GANCHVILEG (434 aa)) form the Ketosynthase family 3 (KS3) domain. Active-site for beta-ketoacyl synthase activity residues include C172, H311, and H355. The tract at residues 450 to 476 (KPSLSSSPSLSPTSTSPPTPRTPANSL) is disordered. A compositionally biased stretch (low complexity) spans 451–463 (PSLSSSPSLSPTS). Residues 567 to 888 (VFTGQGAQWA…CGTLSRAVDD (322 aa)) form a malonyl-CoA:ACP transacylase (MAT) domain region. The interval 957–1096 (HPLLGVRTNT…GKVQLFVGGD (140 aa)) is N-terminal hotdog fold. Positions 957-1265 (HPLLGVRTNT…LTVSPVAPVT (309 aa)) are dehydratase (DH) domain. The 311-residue stretch at 957–1267 (HPLLGVRTNT…VSPVAPVTAD (311 aa)) folds into the PKS/mFAS DH domain. H989 acts as the Proton acceptor; for dehydratase activity in catalysis. Residues 1111–1267 (LNEIDVDTFY…VSPVAPVTAD (157 aa)) are C-terminal hotdog fold. Catalysis depends on D1174, which acts as the Proton donor; for dehydratase activity. The segment at 1334–1367 (HSTNGLTNGHASTNGHGSTNGHISTNGHSTNGDV) is disordered. The segment at 2095–2269 (TYFLVGMAGS…AASVINLTGV (175 aa)) is ketoreductase (KR)domain. The Carrier domain occupies 2384 to 2459 (DMIFRAFQTV…QVVWSVVHQI (76 aa)). An O-(pantetheine 4'-phosphoryl)serine modification is found at S2419.

Requires pantetheine 4'-phosphate as cofactor.

It carries out the reaction 10 malonyl-CoA + acetyl-CoA + 3 AH2 + 8 NADPH + 18 H(+) = cordypyrone A + 3 A + 10 CO2 + 8 NADP(+) + 11 CoA + 8 H2O. Its pathway is secondary metabolite biosynthesis. Functionally, highly reducing polyketide synthase (HR-PKS); part of the gene cluster that mediates the biosynthesis of cordypyrones A and B, 2 pyrones that show modest activities against pathogenic bacteria including methicillin-resistant Staphylococcus aureus (MRSA), Mycobacterium tuberculosis and Bacillus cereus. The HR-PKS milA catalyzes the formation of cordypyrones A via condensation of one acetate with 10 malonate units. Since milA lacks an enoyl reductase domain, the 2 beta-keto processing domains DH and KR of milA collaborate with the trans-enoyl reductase milB to catalyze the different levels of reduction. The cytochrome P450 monooxygenase milC then hydroxylates the C-22 of cordypyrones A to yield cordypyrones B. The chain is Highly reducing polyketide synthase milA from Cordyceps militaris (strain CM01) (Caterpillar fungus).